A 93-amino-acid polypeptide reads, in one-letter code: Pyrimidine/purine nucleoside phosphorylase (93 aa).

Belongs to the nucleoside phosphorylase PpnP family.

The enzyme catalyses a purine D-ribonucleoside + phosphate = a purine nucleobase + alpha-D-ribose 1-phosphate. It catalyses the reaction adenosine + phosphate = alpha-D-ribose 1-phosphate + adenine. The catalysed reaction is cytidine + phosphate = cytosine + alpha-D-ribose 1-phosphate. It carries out the reaction guanosine + phosphate = alpha-D-ribose 1-phosphate + guanine. The enzyme catalyses inosine + phosphate = alpha-D-ribose 1-phosphate + hypoxanthine. It catalyses the reaction thymidine + phosphate = 2-deoxy-alpha-D-ribose 1-phosphate + thymine. The catalysed reaction is uridine + phosphate = alpha-D-ribose 1-phosphate + uracil. It carries out the reaction xanthosine + phosphate = alpha-D-ribose 1-phosphate + xanthine. In terms of biological role, catalyzes the phosphorolysis of diverse nucleosides, yielding D-ribose 1-phosphate and the respective free bases. Can use uridine, adenosine, guanosine, cytidine, thymidine, inosine and xanthosine as substrates. Also catalyzes the reverse reactions. This is Pyrimidine/purine nucleoside phosphorylase from Magnetococcus marinus (strain ATCC BAA-1437 / JCM 17883 / MC-1).